The sequence spans 224 residues: Cytidylate kinase (224 aa).

13–21 (GPSASGKGT) provides a ligand contact to ATP.

The protein belongs to the cytidylate kinase family. Type 1 subfamily.

It localises to the cytoplasm. The catalysed reaction is CMP + ATP = CDP + ADP. It carries out the reaction dCMP + ATP = dCDP + ADP. In Nitrosomonas eutropha (strain DSM 101675 / C91 / Nm57), this protein is Cytidylate kinase.